The chain runs to 597 residues: ATP-dependent lipid A-core flippase (597 aa).

6 helical membrane passes run 26-46 (WIFA…TGLA), 65-85 (IQII…ANFI), 144-164 (ILTI…MAYL), 166-186 (GLLT…IWWV), 250-270 (AISQ…VIHL), and 276-296 (MLAQ…MLLL). The ABC transmembrane type-1 domain maps to 29–311 (AASIITMAIY…LTKINGTLQR (283 aa)). In terms of domain architecture, ABC transporter spans 343–579 (IRFEHLSFCY…ESHYAGLYRL (237 aa)). ATP is bound at residue 377-384 (GHSGSGKS).

The protein belongs to the ABC transporter superfamily. Lipid exporter (TC 3.A.1.106) family. As to quaternary structure, homodimer.

It localises to the cell inner membrane. The catalysed reaction is ATP + H2O + lipid A-core oligosaccharideSide 1 = ADP + phosphate + lipid A-core oligosaccharideSide 2.. Functionally, involved in lipopolysaccharide (LPS) biosynthesis. Translocates lipid A-core from the inner to the outer leaflet of the inner membrane. Transmembrane domains (TMD) form a pore in the inner membrane and the ATP-binding domain (NBD) is responsible for energy generation. The sequence is that of ATP-dependent lipid A-core flippase from Nitrosococcus oceani (strain ATCC 19707 / BCRC 17464 / JCM 30415 / NCIMB 11848 / C-107).